The following is a 448-amino-acid chain: Portal protein (448 aa).

The interval 1 to 25 (MAKRGRKPKELVPGPGSIDPSDVPK) is disordered.

This sequence belongs to the P23virus portal protein family. As to quaternary structure, homododecamer. Interacts with the capsid protein. Interacts with the terminase large subunit; this interaction allows the packaging of viral DNA.

The protein localises to the virion. Forms the portal vertex of the capsid. This portal plays critical roles in head assembly, genome packaging, neck/tail attachment, and genome ejection. The portal protein multimerizes as a single ring-shaped homododecamer arranged around a central channel. Forms the portal vertex of the capsid. This portal plays critical roles in head assembly, genome packaging, neck/tail attachment, and genome ejection. This chain is Portal protein, found in Thermus thermophilus (Thermus thermophilus phage P23-45).